A 301-amino-acid polypeptide reads, in one-letter code: Acetyl-coenzyme A carboxylase carboxyl transferase subunit beta (301 aa).

Positions L25–A294 constitute a CoA carboxyltransferase N-terminal domain.

It belongs to the AccD/PCCB family. Acetyl-CoA carboxylase is a heterohexamer composed of biotin carboxyl carrier protein (AccB), biotin carboxylase (AccC) and two subunits each of ACCase subunit alpha (AccA) and ACCase subunit beta (AccD).

Its subcellular location is the cytoplasm. It carries out the reaction N(6)-carboxybiotinyl-L-lysyl-[protein] + acetyl-CoA = N(6)-biotinyl-L-lysyl-[protein] + malonyl-CoA. The protein operates within lipid metabolism; malonyl-CoA biosynthesis; malonyl-CoA from acetyl-CoA: step 1/1. In terms of biological role, component of the acetyl coenzyme A carboxylase (ACC) complex. Biotin carboxylase (BC) catalyzes the carboxylation of biotin on its carrier protein (BCCP) and then the CO(2) group is transferred by the transcarboxylase to acetyl-CoA to form malonyl-CoA. The sequence is that of Acetyl-coenzyme A carboxylase carboxyl transferase subunit beta from Rhizobium leguminosarum bv. trifolii (strain WSM1325).